The chain runs to 502 residues: Putative diacyglycerol O-acyltransferase MT1809 (502 aa).

The Proton acceptor role is filled by His-174.

Belongs to the long-chain O-acyltransferase family.

The catalysed reaction is an acyl-CoA + a 1,2-diacyl-sn-glycerol = a triacyl-sn-glycerol + CoA. It functions in the pathway glycerolipid metabolism; triacylglycerol biosynthesis. The sequence is that of Putative diacyglycerol O-acyltransferase MT1809 from Mycobacterium tuberculosis (strain CDC 1551 / Oshkosh).